The following is a 707-amino-acid chain: Serine/threonine protein kinase UL97 (707 aa).

The span at 1-14 (MSSALRSRARSASL) shows a compositional bias: low complexity. 4 disordered regions span residues 1–33 (MSSA…SRAR), 113–146 (DGEK…GDGY), 176–198 (FTGG…RPLR), and 231–264 (ESQD…EADS). A compositionally biased stretch (basic and acidic residues) spans 113-127 (DGEKEDAASDKENLR). The segment covering 178 to 188 (GGSDPSDSVSG) has biased composition (low complexity). Residues 337–345 (LGQGSFGEV) and Lys359 each bind ATP. Residue Asp456 is the Proton acceptor of the active site.

The protein belongs to the protein kinase superfamily. Tyr protein kinase family. HCMV ganciclovir subfamily. In terms of assembly, interacts with UL83. Post-translationally, autophosphorylates on serine and threonine residues.

The protein resides in the virion. The enzyme catalyses L-seryl-[protein] + ATP = O-phospho-L-seryl-[protein] + ADP + H(+). It carries out the reaction L-threonyl-[protein] + ATP = O-phospho-L-threonyl-[protein] + ADP + H(+). In terms of biological role, serine/threonine protein kinase that plays important roles in several processes including nuclear viral egress, viral replication or regulation of host cell cycle progression. Participates in the acquisition of tegument during virion morphogenesis in the nucleus. Phosphorylates the viral nuclear egress complex (NEC) subunits UL50 and UL53. Redistributes the host nuclear lamina by phosphorylating cellular Lamins-A/C. Plays a role in viral DNA synthesis by phosphorylating the DNA polymerase processivity factor UL44. Stimulates host cell cycle to support viral DNA synthesis by phosphorylating host retinoblastoma/RB1 protein. Additional substrates have been identified including host EF1D or H2B. Also phosphorylates host SAMHD1 and thereby counteracts its antiviral effect by reducing its dNTP hydrolase activity. This is Serine/threonine protein kinase UL97 (UL97) from Human cytomegalovirus (strain AD169) (HHV-5).